The following is a 125-amino-acid chain: Small ribosomal subunit protein uS12 (125 aa).

Positions 1–27 are disordered; that stretch reads MPTINQLVRKGREKGEQKSTAPALKSC. Asp-89 carries the post-translational modification 3-methylthioaspartic acid. The interval 103–125 is disordered; the sequence is DASGVQKRNQGRSKYGTKRPKKK. Over residues 111–125 the composition is skewed to basic residues; the sequence is NQGRSKYGTKRPKKK.

This sequence belongs to the universal ribosomal protein uS12 family. Part of the 30S ribosomal subunit. Contacts proteins S8 and S17. May interact with IF1 in the 30S initiation complex.

In terms of biological role, with S4 and S5 plays an important role in translational accuracy. Its function is as follows. Interacts with and stabilizes bases of the 16S rRNA that are involved in tRNA selection in the A site and with the mRNA backbone. Located at the interface of the 30S and 50S subunits, it traverses the body of the 30S subunit contacting proteins on the other side and probably holding the rRNA structure together. The combined cluster of proteins S8, S12 and S17 appears to hold together the shoulder and platform of the 30S subunit. This chain is Small ribosomal subunit protein uS12, found in Syntrophomonas wolfei subsp. wolfei (strain DSM 2245B / Goettingen).